Reading from the N-terminus, the 445-residue chain is Phosphoglucosamine mutase (445 aa).

The active-site Phosphoserine intermediate is Ser102. Positions 102, 241, 243, and 245 each coordinate Mg(2+). Ser102 carries the post-translational modification Phosphoserine.

Belongs to the phosphohexose mutase family. It depends on Mg(2+) as a cofactor. In terms of processing, activated by phosphorylation.

The catalysed reaction is alpha-D-glucosamine 1-phosphate = D-glucosamine 6-phosphate. Catalyzes the conversion of glucosamine-6-phosphate to glucosamine-1-phosphate. This is Phosphoglucosamine mutase from Shigella flexneri serotype 5b (strain 8401).